Here is a 401-residue protein sequence, read N- to C-terminus: MLSYDYENALKVGEISLEDINKVDFANAYSNLMEKLDNGVVGFRDVIYDENLDKYKSLNGYENVVVIGMGGSILGTMAIYYAISPFNNNAYFIDNSDPEKTLSILKKVDLNESIIYIISKSGNTLETLVNYYLIKKRIEKLNSFKGKLVFITNGGKLKREAEKNNYDIFSIPENVPGRFSVFTAVGLAPLYSLGVDISKILEGAREMDKICQNEDILKNPALLNGVIHYLYDKRGKDISVIMSYVESLKYFGDWYKQLIGESLGKNKHGITPLLSIGAKDQHSLLQLYMDGKKDKIITFMVAKKYRLDEEIEFEDINDEKISCRYSDIIRSQQKATEIALTNNGVPNVRITLDEINEMAMGALLYMYEMQVGFMGELYNINAYNQPAVEEEKKICWRLIKQ.

The active-site Proton donor is glutamate 261. Active-site residues include histidine 282 and lysine 392.

The protein belongs to the GPI family. Homodimer.

It localises to the cytoplasm. It carries out the reaction alpha-D-glucose 6-phosphate = beta-D-fructose 6-phosphate. It participates in carbohydrate biosynthesis; gluconeogenesis. It functions in the pathway carbohydrate degradation; glycolysis; D-glyceraldehyde 3-phosphate and glycerone phosphate from D-glucose: step 2/4. Its activity is regulated as follows. Competively inhibited by 6-phosphogluconate and erythrose 4-phosphate. Catalyzes the isomerization of glucose-6-P to fructose-6-P. The protein is Glucose-6-phosphate isomerase of Methanocaldococcus jannaschii (strain ATCC 43067 / DSM 2661 / JAL-1 / JCM 10045 / NBRC 100440) (Methanococcus jannaschii).